We begin with the raw amino-acid sequence, 197 residues long: Recombination protein RecR (197 aa).

The C4-type zinc-finger motif lies at 55–70 (CVQCRDFTESEICTIC). Positions 78-173 (QQLCVVESPA…RPSRLAQGMP (96 aa)) constitute a Toprim domain.

Belongs to the RecR family.

Its function is as follows. May play a role in DNA repair. It seems to be involved in an RecBC-independent recombinational process of DNA repair. It may act with RecF and RecO. The polypeptide is Recombination protein RecR (Xanthomonas euvesicatoria pv. vesicatoria (strain 85-10) (Xanthomonas campestris pv. vesicatoria)).